Consider the following 291-residue polypeptide: Ribosome maturation factor RimP (291 aa).

Residues 188–291 (ERGLGEDEEF…GGKPKAKETH (104 aa)) are disordered. Residues 193 to 211 (EDEEFEDDADEVFEGDEAD) show a composition bias toward acidic residues. 2 stretches are compositionally biased toward basic and acidic residues: residues 212–237 (EKAAKDAANAERANAKKAADKAEKRA) and 245–254 (AKSEKAEKSQ).

The protein belongs to the RimP family.

Its subcellular location is the cytoplasm. Its function is as follows. Required for maturation of 30S ribosomal subunits. This chain is Ribosome maturation factor RimP, found in Azorhizobium caulinodans (strain ATCC 43989 / DSM 5975 / JCM 20966 / LMG 6465 / NBRC 14845 / NCIMB 13405 / ORS 571).